The following is a 525-amino-acid chain: MRRRRRRDGFYLAPDFRHREAEDMAGVFDIDLDQPEDAGSEDELEEGGQLNESMDHGGVGPYELGMEHCEKFEISETSVNRGPEKIRPECFELLRVLGKGGYGKVFQVRKVTGANTGKIFAMKVLKKAMIVRNAKDTAHTKAERNILEEVKHPFIVDLIYAFQTGGKLYLILEYLSGGELFMQLEREGIFMEDTACFYLAEISMALGHLHQKGIIYRDLKPENIMLNHQGHVKLTDFGLCKESIHDGTVTHTFCGTIEYMAPEILMRSGHNRAVDWWSLGALMYDMLTGAPPFTGENRKKTIDKILKCKLNLPPYLTQEARDLLKKLLKRNAASRLGAGPGDAGEVQAHPFFRHINWEELLARKVEPPFKPLLQSEEDVSQFDSKFTRQTPVDSPDDSTLSESANQVFLGFTYVAPSVLESVKEKFSFEPKIRSPRRFIGSPRTPVSPVKFSPGDFWGRGASASTANPQTPVEYPMETSGIEQMDVTVSGEASAPLPIRQPNSGPYKKQAFPMISKRPEHLRMNL.

Residues 28 to 32 carry the TOS motif motif; that stretch reads FDIDL. Residues 32–46 show a composition bias toward acidic residues; it reads LDQPEDAGSEDELEE. A disordered region spans residues 32 to 54; sequence LDQPEDAGSEDELEEGGQLNESM. Positions 91–352 constitute a Protein kinase domain; it reads FELLRVLGKG…AGEVQAHPFF (262 aa). ATP contacts are provided by residues 97-105 and lysine 123; that span reads LGKGGYGKV. Aspartate 218 (proton acceptor) is an active-site residue. Phosphothreonine; by PDPK1 is present on threonine 252. The AGC-kinase C-terminal domain maps to 353-423; sequence RHINWEELLA…VAPSVLESVK (71 aa). The disordered stretch occupies residues 380-399; sequence SQFDSKFTRQTPVDSPDDST. Polar residues predominate over residues 381 to 399; the sequence is QFDSKFTRQTPVDSPDDST. Position 394 is a phosphoserine (serine 394). Position 412 is a phosphothreonine; by MTOR, NEK6 and NEK7 (threonine 412). The autoinhibitory domain stretch occupies residues 424–525; it reads EKFSFEPKIR…KRPEHLRMNL (102 aa). 2 positions are modified to phosphoserine: serine 434 and serine 441. Threonine 444 carries the phosphothreonine modification. Phosphoserine is present on residues serine 447 and serine 452. Lysine 516 bears the N6-acetyllysine mark.

Belongs to the protein kinase superfamily. AGC Ser/Thr protein kinase family. S6 kinase subfamily. Interacts with PPP1R9A/neurabin-1. Interacts with RPTOR. Interacts with IRS1. Interacts with EIF3B and EIF3C. Interacts with TRAF4. Interacts with POLDIP3. Interacts (via N-terminus) with IER5. In terms of processing, phosphorylation at Thr-412 is regulated by mTORC1. The phosphorylation at this site is maintained by an agonist-dependent autophosphorylation mechanism. Activated by phosphorylation at Thr-252 by PDPK1. Dephosphorylation by PPP1CC at Thr-412 in mitochondrion.

Its subcellular location is the cytoplasm. It is found in the synapse. It localises to the synaptosome. The protein resides in the mitochondrion outer membrane. The protein localises to the mitochondrion. It carries out the reaction L-seryl-[protein] + ATP = O-phospho-L-seryl-[protein] + ADP + H(+). It catalyses the reaction L-threonyl-[protein] + ATP = O-phospho-L-threonyl-[protein] + ADP + H(+). Its activity is regulated as follows. Activation requires multiple phosphorylation events on serine/threonine residues. Activation appears to be first mediated by phosphorylation of multiple sites in the autoinhibitory domain, which facilitates phosphorylation at Thr-412, disrupting the autoinhibitory mechanism and allowing phosphorylation of Thr-252 by PDPK1. The active conformation of the kinase is believed to be stabilized by a mechanism involving three conserved phosphorylation sites located in the kinase domain activation loop (Thr-252) and in the AGC-kinase C-terminal domain (Ser-394 in the middle of the tail/linker region and Thr-412 within a hydrophobic motif at its end). Activated by mTORC1; isoform Alpha I and isoform Alpha II are sensitive to rapamycin, which inhibits activating phosphorylation at Thr-412. Activated by PDPK1. Serine/threonine-protein kinase that acts downstream of mTOR signaling in response to growth factors and nutrients to promote cell proliferation, cell growth and cell cycle progression. Regulates protein synthesis through phosphorylation of EIF4B, RPS6 and EEF2K, and contributes to cell survival by repressing the pro-apoptotic function of BAD. Under conditions of nutrient depletion, the inactive form associates with the EIF3 translation initiation complex. Upon mitogenic stimulation, phosphorylation by the mechanistic target of rapamycin complex 1 (mTORC1) leads to dissociation from the EIF3 complex and activation. The active form then phosphorylates and activates several substrates in the pre-initiation complex, including the EIF2B complex and the cap-binding complex component EIF4B. Also controls translation initiation by phosphorylating a negative regulator of EIF4A, PDCD4, targeting it for ubiquitination and subsequent proteolysis. Promotes initiation of the pioneer round of protein synthesis by phosphorylating POLDIP3/SKAR. In response to IGF1, activates translation elongation by phosphorylating EEF2 kinase (EEF2K), which leads to its inhibition and thus activation of EEF2. Also plays a role in feedback regulation of mTORC2 by mTORC1 by phosphorylating MAPKAP1/SIN1, MTOR and RICTOR, resulting in the inhibition of mTORC2 and AKT1 signaling. Also involved in feedback regulation of mTORC1 and mTORC2 by phosphorylating DEPTOR. Mediates cell survival by phosphorylating the pro-apoptotic protein BAD and suppressing its pro-apoptotic function. Phosphorylates mitochondrial URI1 leading to dissociation of a URI1-PPP1CC complex. The free mitochondrial PPP1CC can then dephosphorylate RPS6KB1 at Thr-412, which is proposed to be a negative feedback mechanism for the RPS6KB1 anti-apoptotic function. Mediates TNF-alpha-induced insulin resistance by phosphorylating IRS1 at multiple serine residues, resulting in accelerated degradation of IRS1. In cells lacking functional TSC1-2 complex, constitutively phosphorylates and inhibits GSK3B. May be involved in cytoskeletal rearrangement through binding to neurabin. Phosphorylates and activates the pyrimidine biosynthesis enzyme CAD, downstream of MTOR. Following activation by mTORC1, phosphorylates EPRS and thereby plays a key role in fatty acid uptake by adipocytes and also most probably in interferon-gamma-induced translation inhibition. The polypeptide is Ribosomal protein S6 kinase beta-1 (Rps6kb1) (Mus musculus (Mouse)).